Reading from the N-terminus, the 406-residue chain is Nodal homolog (406 aa).

The first 18 residues, 1–18 (MAFLTAVLYLGFACISQG), serve as a signal peptide directing secretion. Residues 19–281 (LPTWPDRVES…RVPGIRRHRR (263 aa)) constitute a propeptide that is removed on maturation. Residues Asn-71, Asn-136, and Asn-172 are each glycosylated (N-linked (GlcNAc...) asparagine). Residues 195–222 (KERAERGSGMSNAEFIDAPGPSQQYNPH) are disordered. Intrachain disulfides connect Cys-306–Cys-372, Cys-335–Cys-403, and Cys-339–Cys-405. Asn-344 carries an N-linked (GlcNAc...) asparagine glycan.

Belongs to the TGF-beta family. Homodimer; disulfide-linked. Interacts with, and is inhibited by cer1 and gdf10/bmp3b. In terms of tissue distribution, in the first phase of expression, localized to the vegetal region of the blastula. During gastrulation (stage 10.5), this expression disappears and instead becomes localized to the dorsal marginal zone, with enrichment in the organizer. During the second phase of expression in neurulae and tailbud embryos, expression restarts firstly in two symmetric patches near the posterior end of the notochord, and then in a large asymmetrical domain in the left lateral plate mesoderm.

The protein resides in the secreted. Its function is as follows. Cooperation and regulatory loops of multiple nodals are essential for mesendoderm patterning in early embryos. Essential for mesoderm formation and axial patterning during embryonic development. Activates the activin-like signaling pathway to induce dorsal and ventral mesoderm in animal cap ectoderm. In addition, also dorsalizes ventral marginal zone (VMZ) tissues during gastrulation. Acts in a downstream signaling cascade via cripto and cer1 to mediate cardiogenesis in embryonic mesoderm. Directs the orientation of the left-right axis by driving the left-specific gene cascade in the left lateral plate mesoderm. The sequence is that of Nodal homolog from Xenopus laevis (African clawed frog).